The chain runs to 356 residues: Histidinol-phosphate aminotransferase 2 (356 aa).

The residue at position 213 (Lys-213) is an N6-(pyridoxal phosphate)lysine.

This sequence belongs to the class-II pyridoxal-phosphate-dependent aminotransferase family. Histidinol-phosphate aminotransferase subfamily. Homodimer. It depends on pyridoxal 5'-phosphate as a cofactor.

It carries out the reaction L-histidinol phosphate + 2-oxoglutarate = 3-(imidazol-4-yl)-2-oxopropyl phosphate + L-glutamate. It participates in amino-acid biosynthesis; L-histidine biosynthesis; L-histidine from 5-phospho-alpha-D-ribose 1-diphosphate: step 7/9. The chain is Histidinol-phosphate aminotransferase 2 from Burkholderia mallei (strain ATCC 23344).